A 167-amino-acid polypeptide reads, in one-letter code: Endoribonuclease YbeY (167 aa).

The interval 64 to 101 is disordered; sequence GKPTNVLSWPSEERASEEPGMAPEPPEPGDPEDPEPLG. Over residues 90–99 the composition is skewed to acidic residues; that stretch reads EPGDPEDPEP. H131, H135, and H141 together coordinate Zn(2+).

Belongs to the endoribonuclease YbeY family. Zn(2+) serves as cofactor.

It localises to the cytoplasm. In terms of biological role, single strand-specific metallo-endoribonuclease involved in late-stage 70S ribosome quality control and in maturation of the 3' terminus of the 16S rRNA. The chain is Endoribonuclease YbeY from Cereibacter sphaeroides (strain ATCC 17023 / DSM 158 / JCM 6121 / CCUG 31486 / LMG 2827 / NBRC 12203 / NCIMB 8253 / ATH 2.4.1.) (Rhodobacter sphaeroides).